The chain runs to 505 residues: MKHMSIRAEEISALIKQQIENYQSEIEVSDVGTVIQVGDGIARAHGLDNVMAGELVEFSNGVMGLAQNLEENNVGIIILGPYTEIREGDEVRRTGRIMQVPVGKELIGRVVNPLGQPVDGLGPINTTNTRPIESPAPGVMDRKSVHEPLQTGIKAIDALVPIGRGQRELIIGDRQTGKTAVALDTIINQKDEDMICIYVAIGQKESTVRNVVETLRKHGALEYTIVVTASASQPAPLLYLAPYAGVTMGEEFMYNGKHVLVVYDDLSKQAAAYRELSLLLRRPPGREAYPGDVFYLHSRLLERAAKLSDAKGGGSLTALPFIETQAGDVSAYIPTNVISITDGQIFLQSDLFFSGVRPAIDAGTSVSRVGGSAQIKAMSKVSGTLRLDLASYRELEAFAQFGSDLDKATQAKLNRGARTVEVLKQGLHKPLRVEKQVIILYALTRGFLDDIPVVDITRFEEEFHAWLDSNATDLLEEIRTTKKLADDDKFAAAINGFKKVFVASE.

Residues 118-138 (VDGLGPINTTNTRPIESPAPG) are disordered. Position 172 to 179 (172 to 179 (GDRQTGKT)) interacts with ATP.

This sequence belongs to the ATPase alpha/beta chains family. F-type ATPases have 2 components, CF(1) - the catalytic core - and CF(0) - the membrane proton channel. CF(1) has five subunits: alpha(3), beta(3), gamma(1), delta(1), epsilon(1). CF(0) has three main subunits: a(1), b(2) and c(9-12). The alpha and beta chains form an alternating ring which encloses part of the gamma chain. CF(1) is attached to CF(0) by a central stalk formed by the gamma and epsilon chains, while a peripheral stalk is formed by the delta and b chains.

Its subcellular location is the cell membrane. It catalyses the reaction ATP + H2O + 4 H(+)(in) = ADP + phosphate + 5 H(+)(out). In terms of biological role, produces ATP from ADP in the presence of a proton gradient across the membrane. The alpha chain is a regulatory subunit. The protein is ATP synthase subunit alpha of Bacillus cereus (strain ATCC 14579 / DSM 31 / CCUG 7414 / JCM 2152 / NBRC 15305 / NCIMB 9373 / NCTC 2599 / NRRL B-3711).